Reading from the N-terminus, the 396-residue chain is Digeranylgeranylglycerophospholipid reductase (396 aa).

Positions 14, 33, 44, 45, 47, 100, 124, 162, 283, 295, and 296 each coordinate FAD. A 2,3-bis-O-(geranylgeranyl)-sn-glycerol 1-phospholipid is bound by residues Lys-338 and Val-374.

It belongs to the geranylgeranyl reductase family. DGGGPL reductase subfamily. As to quaternary structure, monomer. The cofactor is FAD.

It localises to the cell membrane. It carries out the reaction 2,3-bis-O-(phytanyl)-sn-glycerol 1-phosphate + 8 NADP(+) = 2,3-bis-O-(geranylgeranyl)-sn-glycerol 1-phosphate + 8 NADPH + 8 H(+). The enzyme catalyses 2,3-bis-O-(phytanyl)-sn-glycerol 1-phosphate + 8 NAD(+) = 2,3-bis-O-(geranylgeranyl)-sn-glycerol 1-phosphate + 8 NADH + 8 H(+). The catalysed reaction is a 2,3-bis-O-phytanyl-sn-glycerol 1-phospholipid + 8 A = a 2,3-bis-O-(geranylgeranyl)-sn-glycerol 1-phospholipid + 8 AH2. It catalyses the reaction CDP-2,3-bis-O-(geranylgeranyl)-sn-glycerol + 8 AH2 = CDP-2,3-bis-O-(phytanyl)-sn-glycerol + 8 A. It carries out the reaction archaetidylserine + 8 AH2 = 2,3-bis-O-phytanyl-sn-glycero-3-phospho-L-serine + 8 A. Its pathway is membrane lipid metabolism; glycerophospholipid metabolism. Functionally, is involved in the reduction of 2,3-digeranylgeranylglycerophospholipids (unsaturated archaeols) into 2,3-diphytanylglycerophospholipids (saturated archaeols) in the biosynthesis of archaeal membrane lipids. Catalyzes the formation of archaetidic acid (2,3-di-O-phytanyl-sn-glyceryl phosphate) from 2,3-di-O-geranylgeranylglyceryl phosphate (DGGGP) via the hydrogenation of each double bond of the isoprenoid chains. Can use both NADH and NADPH as electron donors. Also catalyzes the reduction of 2,3-di-O-geranylgeranylglyceryl phosphate analogs such as 2,3-di-O-phytyl-sn-glyceryl phosphate (DPHGP), 3-O-(2,3-di-O-phytyl-sn-glycero-phospho)-sn-glycerol (DPHGPG) and 2,3-di-O-phytyl-sn-glycero-phosphoethanolamine (DPHGPE). Is not active toward 2,3-di-O-geranylgeranylglycerol. Is also probably able to reduce double bonds of geranyl groups in CDP-2,3-bis-O-(geranylgeranyl)-sn-glycerol and archaetidylserine, thus acting at various stages in the biosynthesis of archaeal membrane lipids. The sequence is that of Digeranylgeranylglycerophospholipid reductase from Thermoplasma acidophilum (strain ATCC 25905 / DSM 1728 / JCM 9062 / NBRC 15155 / AMRC-C165).